The sequence spans 38 residues: Photosystem II reaction center protein L (38 aa).

A helical transmembrane segment spans residues 17-37; the sequence is SLYWGLLLIFVLAVLFSSYIF.

This sequence belongs to the PsbL family. As to quaternary structure, PSII is composed of 1 copy each of membrane proteins PsbA, PsbB, PsbC, PsbD, PsbE, PsbF, PsbH, PsbI, PsbJ, PsbK, PsbL, PsbM, PsbT, PsbY, PsbZ, Psb30/Ycf12, at least 3 peripheral proteins of the oxygen-evolving complex and a large number of cofactors. It forms dimeric complexes.

It localises to the plastid. Its subcellular location is the chloroplast thylakoid membrane. Its function is as follows. One of the components of the core complex of photosystem II (PSII). PSII is a light-driven water:plastoquinone oxidoreductase that uses light energy to abstract electrons from H(2)O, generating O(2) and a proton gradient subsequently used for ATP formation. It consists of a core antenna complex that captures photons, and an electron transfer chain that converts photonic excitation into a charge separation. This subunit is found at the monomer-monomer interface and is required for correct PSII assembly and/or dimerization. This Bigelowiella natans (Pedinomonas minutissima) protein is Photosystem II reaction center protein L.